We begin with the raw amino-acid sequence, 361 residues long: Chorismate synthase (361 aa).

The NADP(+) site is built by Arg-48 and Arg-54. Residues 125–127 (RSS), 238–239 (NA), Gly-278, 293–297 (KPTSS), and Arg-319 each bind FMN.

It belongs to the chorismate synthase family. As to quaternary structure, homotetramer. FMNH2 serves as cofactor.

The catalysed reaction is 5-O-(1-carboxyvinyl)-3-phosphoshikimate = chorismate + phosphate. Its pathway is metabolic intermediate biosynthesis; chorismate biosynthesis; chorismate from D-erythrose 4-phosphate and phosphoenolpyruvate: step 7/7. In terms of biological role, catalyzes the anti-1,4-elimination of the C-3 phosphate and the C-6 proR hydrogen from 5-enolpyruvylshikimate-3-phosphate (EPSP) to yield chorismate, which is the branch point compound that serves as the starting substrate for the three terminal pathways of aromatic amino acid biosynthesis. This reaction introduces a second double bond into the aromatic ring system. This Pectobacterium carotovorum subsp. carotovorum (strain PC1) protein is Chorismate synthase.